The sequence spans 744 residues: Phosphoribosylformylglycinamidine synthase subunit PurL (744 aa).

H50 is a catalytic residue. Residues Y53 and K92 each coordinate ATP. E94 provides a ligand contact to Mg(2+). Residues S95–H98 and R117 contribute to the substrate site. H96 serves as the catalytic Proton acceptor. D118 contacts Mg(2+). Q241 provides a ligand contact to substrate. D269 lines the Mg(2+) pocket. E313–Q315 lines the substrate pocket. ATP-binding residues include D495 and G532. N533 serves as a coordination point for Mg(2+). S535 is a substrate binding site.

Belongs to the FGAMS family. Monomer. Part of the FGAM synthase complex composed of 1 PurL, 1 PurQ and 2 PurS subunits.

It is found in the cytoplasm. The enzyme catalyses N(2)-formyl-N(1)-(5-phospho-beta-D-ribosyl)glycinamide + L-glutamine + ATP + H2O = 2-formamido-N(1)-(5-O-phospho-beta-D-ribosyl)acetamidine + L-glutamate + ADP + phosphate + H(+). It participates in purine metabolism; IMP biosynthesis via de novo pathway; 5-amino-1-(5-phospho-D-ribosyl)imidazole from N(2)-formyl-N(1)-(5-phospho-D-ribosyl)glycinamide: step 1/2. Its function is as follows. Part of the phosphoribosylformylglycinamidine synthase complex involved in the purines biosynthetic pathway. Catalyzes the ATP-dependent conversion of formylglycinamide ribonucleotide (FGAR) and glutamine to yield formylglycinamidine ribonucleotide (FGAM) and glutamate. The FGAM synthase complex is composed of three subunits. PurQ produces an ammonia molecule by converting glutamine to glutamate. PurL transfers the ammonia molecule to FGAR to form FGAM in an ATP-dependent manner. PurS interacts with PurQ and PurL and is thought to assist in the transfer of the ammonia molecule from PurQ to PurL. In Rhizobium johnstonii (strain DSM 114642 / LMG 32736 / 3841) (Rhizobium leguminosarum bv. viciae), this protein is Phosphoribosylformylglycinamidine synthase subunit PurL.